We begin with the raw amino-acid sequence, 87 residues long: Large ribosomal subunit protein eL20 (87 aa).

It belongs to the eukaryotic ribosomal protein eL20 family. Part of the 50S ribosomal subunit. Binds 23S rRNA.

This is Large ribosomal subunit protein eL20 from Hyperthermus butylicus (strain DSM 5456 / JCM 9403 / PLM1-5).